A 501-amino-acid chain; its full sequence is Dipeptide and tripeptide permease A (501 aa).

Residues 1–21 lie on the Cytoplasmic side of the membrane; it reads MSTANKKPTESVSLNAFKQPK. A helical transmembrane segment spans residues 22-44; it reads AFYLIFSIELWERFGYYGLQGIM. The Periplasmic segment spans residues 45-59; that stretch reads AVYLVKQLGMSEADS. The chain crosses the membrane as a helical span at residues 60–80; the sequence is ITLFSSFSALVYGLVAIGGWL. Residues 81–89 are Cytoplasmic-facing; it reads GDKILGTKR. Residues 90 to 110 form a helical membrane-spanning segment; sequence VIMLGAVVLAIGYALVAWSGH. A topological domain (periplasmic) is located at residue Asp-111. Residues 112-132 traverse the membrane as a helical segment; sequence AGIVYMGMAAIAVGNGLFKAN. Residues 133 to 153 are Cytoplasmic-facing; it reads PSSLLSTCYAKDDPRLDGAFT. A helical membrane pass occupies residues 154–174; sequence MYYMSVNIGSFFSMLATPWLA. Over 175-178 the chain is Periplasmic; that stretch reads ARYG. Residues 179–199 traverse the membrane as a helical segment; that stretch reads WSTAFALSVVGMLITVVNFAF. The Cytoplasmic portion of the chain corresponds to 200–219; that stretch reads CQRWVKSYGSKPDFEPINFR. The helical transmembrane segment at 220–240 threads the bilayer; sequence NLLLTIVGIVVLIAVATWLLH. Residues 241–246 are Periplasmic-facing; that stretch reads NQDIAR. The chain crosses the membrane as a helical span at residues 247–267; that stretch reads MVLGVIALGIVIIFGKEAFSM. The Cytoplasmic segment spans residues 268-274; that stretch reads HGAARRK. Residues 275-295 traverse the membrane as a helical segment; it reads MIVAFILMLQAIIFFVLYSQM. At 296–320 the chain is on the periplasmic side; sequence PTSLNFFAIRNVEHSILGIAFEPEQ. A helical membrane pass occupies residues 321–341; the sequence is YQALNPFWIIIGSPILAAIYN. Topologically, residues 342 to 352 are cytoplasmic; the sequence is RMGDTLPMPMK. Residues 353 to 373 form a helical membrane-spanning segment; sequence FAIGMVLCSGAFLILPLGAKF. The Periplasmic segment spans residues 374–383; the sequence is ANDAGIVSVN. Residues 384–404 traverse the membrane as a helical segment; it reads WLIASYGLQSIGELMISGLGL. The Cytoplasmic segment spans residues 405–414; it reads AMVAQLVPQR. A helical membrane pass occupies residues 415–435; it reads LMGFIMGSWFLTTAGANIIGG. Over 436–459 the chain is Periplasmic; the sequence is YVANLMAVPSDVTDPLMSLEVYGR. Residues 460–480 form a helical membrane-spanning segment; the sequence is VFMQIGIATAVIAVLMLLTAP. The Cytoplasmic segment spans residues 481–501; it reads KLNRMTQDDDTAEKGSKAATV.

This sequence belongs to the major facilitator superfamily. Proton-dependent oligopeptide transporter (POT/PTR) (TC 2.A.17) family. DtpA subfamily.

It is found in the cell inner membrane. In terms of biological role, proton-dependent permease that transports di- and tripeptides. In Salmonella typhimurium (strain LT2 / SGSC1412 / ATCC 700720), this protein is Dipeptide and tripeptide permease A.